Here is an 82-residue protein sequence, read N- to C-terminus: Small ribosomal subunit protein uS17 (82 aa).

It belongs to the universal ribosomal protein uS17 family. In terms of assembly, part of the 30S ribosomal subunit.

One of the primary rRNA binding proteins, it binds specifically to the 5'-end of 16S ribosomal RNA. This is Small ribosomal subunit protein uS17 from Shewanella amazonensis (strain ATCC BAA-1098 / SB2B).